A 241-amino-acid chain; its full sequence is Deoxyribose-phosphate aldolase (241 aa).

Asp-95 functions as the Proton donor/acceptor in the catalytic mechanism. The active-site Schiff-base intermediate with acetaldehyde is Lys-159. Catalysis depends on Lys-188, which acts as the Proton donor/acceptor.

The protein belongs to the DeoC/FbaB aldolase family. DeoC type 1 subfamily.

It localises to the cytoplasm. It catalyses the reaction 2-deoxy-D-ribose 5-phosphate = D-glyceraldehyde 3-phosphate + acetaldehyde. It functions in the pathway carbohydrate degradation; 2-deoxy-D-ribose 1-phosphate degradation; D-glyceraldehyde 3-phosphate and acetaldehyde from 2-deoxy-alpha-D-ribose 1-phosphate: step 2/2. Catalyzes a reversible aldol reaction between acetaldehyde and D-glyceraldehyde 3-phosphate to generate 2-deoxy-D-ribose 5-phosphate. The protein is Deoxyribose-phosphate aldolase of Rhodopirellula baltica (strain DSM 10527 / NCIMB 13988 / SH1).